A 196-amino-acid chain; its full sequence is MPNMSSNIPRMQQRYDESVRAALTETYGYKNVHQVPRLLKISMNMGVGAAVGDKKVLDLAIDSMTQITGQKPVTTIARKSIAGFRLREGMPIGCMVTMRRQRMYEFLDRLVSIVLPRVRDFRGISRKAFDGNGNYTLGLNEQLVFPELNPDKFVRPQGMNISFVTSAKTDDEAREMLRLFGMPFKQPKEKEQAGAA.

It belongs to the universal ribosomal protein uL5 family. In terms of assembly, part of the 50S ribosomal subunit; part of the 5S rRNA/L5/L18/L25 subcomplex. Contacts the 5S rRNA and the P site tRNA. Forms a bridge to the 30S subunit in the 70S ribosome.

Functionally, this is one of the proteins that bind and probably mediate the attachment of the 5S RNA into the large ribosomal subunit, where it forms part of the central protuberance. In the 70S ribosome it contacts protein S13 of the 30S subunit (bridge B1b), connecting the 2 subunits; this bridge is implicated in subunit movement. Contacts the P site tRNA; the 5S rRNA and some of its associated proteins might help stabilize positioning of ribosome-bound tRNAs. This chain is Large ribosomal subunit protein uL5, found in Rhodopirellula baltica (strain DSM 10527 / NCIMB 13988 / SH1).